A 212-amino-acid chain; its full sequence is ECF RNA polymerase sigma factor SigD (212 aa).

The sigma-70 factor domain-2 stretch occupies residues 49 to 119 (ETIRPIVVRY…VADAHRAAGR (71 aa)). Positions 75-78 (DVAQ) match the Polymerase core binding motif. The interval 152–201 (NELLEILPAKQREILILRVVVGLSAEETAAAVGSTTGAVRVAQHRALQRL) is sigma-70 factor domain-4. Positions 176–195 (AEETAAAVGSTTGAVRVAQH) form a DNA-binding region, H-T-H motif.

The protein belongs to the sigma-70 factor family. ECF subfamily. Interacts transiently with the RNA polymerase catalytic core formed by RpoA, RpoB, RpoC and RpoZ (2 alpha, 1 beta, 1 beta' and 1 omega subunit) to form the RNA polymerase holoenzyme that can initiate transcription. Interacts (via sigma-70 factor domain 4) with RsdA.

Its function is as follows. Sigma factors are initiation factors that promote the attachment of RNA polymerase to specific initiation sites and are then released. Extracytoplasmic function (ECF) sigma factors are held in an inactive form by an anti-sigma factor until released by regulated intramembrane proteolysis. The chain is ECF RNA polymerase sigma factor SigD (sigD) from Mycobacterium bovis (strain ATCC BAA-935 / AF2122/97).